We begin with the raw amino-acid sequence, 1071 residues long: Carbamoyl phosphate synthase large chain (1071 aa).

Residues 1–399 are carboxyphosphate synthetic domain; that stretch reads MPKREDIKKV…SLLKAFKSLD (399 aa). Positions 129, 169, 175, 176, 208, 210, 215, 241, 242, 243, 284, and 296 each coordinate ATP. Residues 133–325 enclose the ATP-grasp 1 domain; that stretch reads KETMLRIGEK…IARVTAKIAI (193 aa). Q284, E296, and N298 together coordinate Mg(2+). Residues Q284, E296, and N298 each contribute to the Mn(2+) site. An oligomerization domain region spans residues 400 to 540; sequence IDNQLGNKHW…YSTYEDSCET (141 aa). The segment at 541–932 is carbamoyl phosphate synthetic domain; the sequence is NATTDKKKIL…YKAELAADNV (392 aa). The ATP-grasp 2 domain occupies 673–864; the sequence is YILMKELGVP…LAKIAAKVIA (192 aa). Positions 709, 748, 750, 755, 780, 781, 782, 783, 823, and 835 each coordinate ATP. 3 residues coordinate Mg(2+): Q823, E835, and N837. Mn(2+)-binding residues include Q823, E835, and N837. Positions 931–1071 constitute an MGS-like domain; the sequence is NVLPLTGKVF…INEYHKEMEN (141 aa). The allosteric domain stretch occupies residues 933–1071; it reads LPLTGKVFLS…INEYHKEMEN (139 aa).

This sequence belongs to the CarB family. In terms of assembly, composed of two chains; the small (or glutamine) chain promotes the hydrolysis of glutamine to ammonia, which is used by the large (or ammonia) chain to synthesize carbamoyl phosphate. Tetramer of heterodimers (alpha,beta)4. Requires Mg(2+) as cofactor. Mn(2+) serves as cofactor.

It catalyses the reaction hydrogencarbonate + L-glutamine + 2 ATP + H2O = carbamoyl phosphate + L-glutamate + 2 ADP + phosphate + 2 H(+). The catalysed reaction is hydrogencarbonate + NH4(+) + 2 ATP = carbamoyl phosphate + 2 ADP + phosphate + 2 H(+). Its pathway is amino-acid biosynthesis; L-arginine biosynthesis; carbamoyl phosphate from bicarbonate: step 1/1. It participates in pyrimidine metabolism; UMP biosynthesis via de novo pathway; (S)-dihydroorotate from bicarbonate: step 1/3. Its function is as follows. Large subunit of the glutamine-dependent carbamoyl phosphate synthetase (CPSase). CPSase catalyzes the formation of carbamoyl phosphate from the ammonia moiety of glutamine, carbonate, and phosphate donated by ATP, constituting the first step of 2 biosynthetic pathways, one leading to arginine and/or urea and the other to pyrimidine nucleotides. The large subunit (synthetase) binds the substrates ammonia (free or transferred from glutamine from the small subunit), hydrogencarbonate and ATP and carries out an ATP-coupled ligase reaction, activating hydrogencarbonate by forming carboxy phosphate which reacts with ammonia to form carbamoyl phosphate. The chain is Carbamoyl phosphate synthase large chain from Methanosarcina barkeri (strain Fusaro / DSM 804).